Reading from the N-terminus, the 276-residue chain is Hydroxyethylthiazole kinase (276 aa).

ATP contacts are provided by Arg126 and Ser172. Gly199 is a substrate binding site.

This sequence belongs to the Thz kinase family. The cofactor is Mg(2+).

The enzyme catalyses 5-(2-hydroxyethyl)-4-methylthiazole + ATP = 4-methyl-5-(2-phosphooxyethyl)-thiazole + ADP + H(+). Its pathway is cofactor biosynthesis; thiamine diphosphate biosynthesis; 4-methyl-5-(2-phosphoethyl)-thiazole from 5-(2-hydroxyethyl)-4-methylthiazole: step 1/1. Catalyzes the phosphorylation of the hydroxyl group of 4-methyl-5-beta-hydroxyethylthiazole (THZ). The polypeptide is Hydroxyethylthiazole kinase (Burkholderia pseudomallei (strain 1106a)).